A 422-amino-acid polypeptide reads, in one-letter code: MLDIRLFREQPELVREGFAKVGRDPGLVDQVIGLDLKRREAITEVERLKAERNAGSKDVARTKDKAERDVKIAAMKLVGDQITELDAQANAIDLELHNLLLDLPNLPLPEVPVGKDEHDNVVVRVEGTIQEPDFAVKPHWELGEALGILDFERGVRMSGTRFFVMKGLGVRLQRALISWMIDMHVDQHGYTELAVPYLVKADAMVGTGNLPKFADTIFHIEDTDLWLIPTAEVPVTNLHREEILDKAQLPLRYVAHTPCFRNEQMSAGRDVRGIKRLYQFDKVEMVKMVEPATSYDELFSLISNAEDVCKGLKIPYRLLQLCTADLGIATVKYDLEMWAPGMNEWLEVSSCGLFGDYQARRANIRYRPEAGAKPEFVHTLNGSGLALPRVIIAILENYQNADGSVTVPEVLRPYMGGIERIG.

230 to 232 (TAE) is a binding site for L-serine. 261–263 (RNE) contributes to the ATP binding site. E284 is an L-serine binding site. Residue 347 to 350 (EVSS) coordinates ATP. S383 contacts L-serine.

This sequence belongs to the class-II aminoacyl-tRNA synthetase family. Type-1 seryl-tRNA synthetase subfamily. Homodimer. The tRNA molecule binds across the dimer.

Its subcellular location is the cytoplasm. The catalysed reaction is tRNA(Ser) + L-serine + ATP = L-seryl-tRNA(Ser) + AMP + diphosphate + H(+). The enzyme catalyses tRNA(Sec) + L-serine + ATP = L-seryl-tRNA(Sec) + AMP + diphosphate + H(+). It participates in aminoacyl-tRNA biosynthesis; selenocysteinyl-tRNA(Sec) biosynthesis; L-seryl-tRNA(Sec) from L-serine and tRNA(Sec): step 1/1. Functionally, catalyzes the attachment of serine to tRNA(Ser). Is also able to aminoacylate tRNA(Sec) with serine, to form the misacylated tRNA L-seryl-tRNA(Sec), which will be further converted into selenocysteinyl-tRNA(Sec). The polypeptide is Serine--tRNA ligase (Herpetosiphon aurantiacus (strain ATCC 23779 / DSM 785 / 114-95)).